Reading from the N-terminus, the 145-residue chain is D-aminoacyl-tRNA deacylase (145 aa).

The Gly-cisPro motif, important for rejection of L-amino acids signature appears at G137 to P138.

This sequence belongs to the DTD family. In terms of assembly, homodimer.

The protein localises to the cytoplasm. It carries out the reaction glycyl-tRNA(Ala) + H2O = tRNA(Ala) + glycine + H(+). It catalyses the reaction a D-aminoacyl-tRNA + H2O = a tRNA + a D-alpha-amino acid + H(+). An aminoacyl-tRNA editing enzyme that deacylates mischarged D-aminoacyl-tRNAs. Also deacylates mischarged glycyl-tRNA(Ala), protecting cells against glycine mischarging by AlaRS. Acts via tRNA-based rather than protein-based catalysis; rejects L-amino acids rather than detecting D-amino acids in the active site. By recycling D-aminoacyl-tRNA to D-amino acids and free tRNA molecules, this enzyme counteracts the toxicity associated with the formation of D-aminoacyl-tRNA entities in vivo and helps enforce protein L-homochirality. The chain is D-aminoacyl-tRNA deacylase from Shewanella amazonensis (strain ATCC BAA-1098 / SB2B).